A 200-amino-acid polypeptide reads, in one-letter code: Small ribosomal subunit protein mS38 (200 aa).

This sequence belongs to the mitochondrion-specific ribosomal protein mS38 family. In terms of assembly, component of the mitochondrial ribosome small subunit (28S) which comprises a 12S rRNA and about 30 distinct proteins. Interacts with Aurora-A. In terms of tissue distribution, ubiquitously expressed and especially highly expressed in heart, skeletal muscle and testis.

Its subcellular location is the mitochondrion matrix. The protein localises to the nucleus. In terms of biological role, may act as a negative regulator of Aurora-A kinase, by down-regulation through proteasome-dependent degradation. This chain is Small ribosomal subunit protein mS38 (Aurkaip1), found in Mus musculus (Mouse).